Reading from the N-terminus, the 337-residue chain is tRNA N6-adenosine threonylcarbamoyltransferase (337 aa).

Fe cation contacts are provided by His-111 and His-115. Substrate is bound by residues 134–138, Asp-167, Gly-180, and Asn-272; that span reads LVSGG. Asp-300 contacts Fe cation.

This sequence belongs to the KAE1 / TsaD family. Fe(2+) is required as a cofactor.

Its subcellular location is the cytoplasm. It carries out the reaction L-threonylcarbamoyladenylate + adenosine(37) in tRNA = N(6)-L-threonylcarbamoyladenosine(37) in tRNA + AMP + H(+). Required for the formation of a threonylcarbamoyl group on adenosine at position 37 (t(6)A37) in tRNAs that read codons beginning with adenine. Is involved in the transfer of the threonylcarbamoyl moiety of threonylcarbamoyl-AMP (TC-AMP) to the N6 group of A37, together with TsaE and TsaB. TsaD likely plays a direct catalytic role in this reaction. This Escherichia coli (strain SMS-3-5 / SECEC) protein is tRNA N6-adenosine threonylcarbamoyltransferase.